Here is a 159-residue protein sequence, read N- to C-terminus: MKVETCVYSGYKIHPGHGKRLVRTDGKVQIFLSGKALKGAKLRRNPRDIRWTVLYRIKNKKGTHGQEQVTRKKTKKSVQVVNRAVAGLSLDAILAKRNQTEDFRRQQREQAAKIAKDANKAVRAAKAAANKEKKASQPKTQQKTAKNVKTAAPRVGGKR.

The interval 118–159 (ANKAVRAAKAAANKEKKASQPKTQQKTAKNVKTAAPRVGGKR) is disordered. Over residues 137–147 (QPKTQQKTAKN) the composition is skewed to polar residues.

The protein belongs to the eukaryotic ribosomal protein eL24 family.

This is Large ribosomal subunit protein eL24 from Caenorhabditis elegans.